The following is a 408-amino-acid chain: Ribulose bisphosphate carboxylase/oxygenase activase, chloroplastic (408 aa).

A chloroplast-targeting transit peptide spans 1–32 (MQVTMKSSAVSGQRVGGARVATRSVRRAQLQV). An ATP-binding site is contributed by 138-145 (GGKGQGKT).

It belongs to the RuBisCO activase family. Monomer.

Its subcellular location is the plastid. The protein localises to the chloroplast stroma. Its function is as follows. Activation of RuBisCO (ribulose-1,5-bisphosphate carboxylase/oxygenase; EC 4.1.1.39) involves the ATP-dependent carboxylation of the epsilon-amino group of lysine leading to a carbamate structure. In Chlamydomonas reinhardtii (Chlamydomonas smithii), this protein is Ribulose bisphosphate carboxylase/oxygenase activase, chloroplastic.